A 126-amino-acid chain; its full sequence is MADEIAKAQVARPGGDTIFGKIIRKEIPAKIIFEDDRCLAFHDISPQAPTHFLVIPKKHISQISVAEDDNESLLGHLMIVGKKCAADLGLNKGYRMVVNEGSDGGQSVYHVHLHVLGGRQMHWPPG.

N-acetylalanine is present on Ala2. An HIT domain is found at 18–126 (IFGKIIRKEI…GGRQMHWPPG (109 aa)). N6-acetyllysine occurs at positions 21 and 30. Residue 43 to 44 (DI) coordinates AMP. Residues Ser45 and Ser72 each carry the phosphoserine modification. AMP is bound by residues Asn99, 105-107 (GQS), and 112-114 (HLH). Residues 110 to 114 (HVHLH) carry the Histidine triad motif motif. Residue His112 is the Tele-AMP-histidine intermediate of the active site.

It belongs to the HINT family. As to quaternary structure, homodimer. Interacts with CDK7. Interacts with RUVBL1 and RUVBL2 and is associated with the LEF1/TCF1-CTNNB1 complex and with a KAT5 histone acetyltransferase complex. Identified in a complex with MITF and CTNNB1. Interacts with CDC34 and RBX1, and is part of a SCF (SKP2-CUL1-F-box protein) E3 ubiquitin-protein ligase complex. Interacts with SUMO1, SUMO2 and RGS17. Interacts with the Ten-1 ICD form of TENM1. Interacts with CALM1; interaction increases in the presence of calcium ions.

It localises to the cytoplasm. The protein resides in the nucleus. It catalyses the reaction adenosine 5'-phosphoramidate + H2O = AMP + NH4(+). Functionally, exhibits adenosine 5'-monophosphoramidase activity, hydrolyzing purine nucleotide phosphoramidates with a single phosphate group such as adenosine 5'monophosphoramidate (AMP-NH2) to yield AMP and NH2. Hydrolyzes adenosine 5'monophosphomorpholidate (AMP-morpholidate) and guanosine 5'monophosphomorpholidate (GMP-morpholidate). Hydrolyzes lysyl-AMP (AMP-N-epsilon-(N-alpha-acetyl lysine methyl ester)) generated by lysine tRNA ligase, as well as Met-AMP, His-AMP and Asp-AMP, lysyl-GMP (GMP-N-epsilon-(N-alpha-acetyl lysine methyl ester)) and AMP-N-alanine methyl ester. Can also convert adenosine 5'-O-phosphorothioate and guanosine 5'-O-phosphorothioate to the corresponding nucleoside 5'-O-phosphates with concomitant release of hydrogen sulfide. In addition, functions as a scaffolding protein that modulates transcriptional activation by the LEF1/TCF1-CTNNB1 complex and by the complex formed with MITF and CTNNB1. Modulates p53/TP53 levels and p53/TP53-mediated apoptosis. Modulates proteasomal degradation of target proteins by the SCF (SKP2-CUL1-F-box protein) E3 ubiquitin-protein ligase complex. Also exhibits SUMO-specific isopeptidase activity, deconjugating SUMO1 from RANGAP1 and RGS17. The polypeptide is Adenosine 5'-monophosphoramidase HINT1 (HINT1) (Pongo abelii (Sumatran orangutan)).